We begin with the raw amino-acid sequence, 430 residues long: Adenylosuccinate synthetase (430 aa).

GTP is bound by residues 12-18 (GDEGKGK) and 40-42 (GHT). Asp13 acts as the Proton acceptor in catalysis. The Mg(2+) site is built by Asp13 and Gly40. Residues 13–16 (DEGK), 38–41 (NAGH), Thr128, Arg142, Gln223, Thr238, and Arg302 contribute to the IMP site. The active-site Proton donor is His41. 298-304 (TTTGRPR) contributes to the substrate binding site. GTP-binding positions include Arg304, 330-332 (SID), and 412-414 (SVG).

This sequence belongs to the adenylosuccinate synthetase family. In terms of assembly, homodimer. Requires Mg(2+) as cofactor.

It is found in the cytoplasm. The enzyme catalyses IMP + L-aspartate + GTP = N(6)-(1,2-dicarboxyethyl)-AMP + GDP + phosphate + 2 H(+). It functions in the pathway purine metabolism; AMP biosynthesis via de novo pathway; AMP from IMP: step 1/2. Plays an important role in the de novo pathway of purine nucleotide biosynthesis. Catalyzes the first committed step in the biosynthesis of AMP from IMP. This is Adenylosuccinate synthetase from Streptococcus pyogenes serotype M5 (strain Manfredo).